The chain runs to 595 residues: Tripeptidyl-peptidase SED3 (595 aa).

The signal sequence occupies residues 1–22 (MLLPWQQTIIILFLGVNSLVAA). A propeptide spans 23–201 (LRNTYRTVEE…KLETIQLSSN (179 aa)) (removed in mature form). 3 N-linked (GlcNAc...) asparagine glycosylation sites follow: N207, N264, and N278. Positions 209–595 (TITPQCLRDI…EILAKIVRDL (387 aa)) constitute a Peptidase S53 domain. Residues E285 and D289 each act as charge relay system in the active site. Residues N298 and N365 are each glycosylated (N-linked (GlcNAc...) asparagine). The Charge relay system role is filled by S499. The Ca(2+) site is built by D541 and I542. Residues N554, N557, and N569 are each glycosylated (N-linked (GlcNAc...) asparagine). Residues G573 and D575 each coordinate Ca(2+).

Ca(2+) serves as cofactor.

Its subcellular location is the secreted. It is found in the extracellular space. The catalysed reaction is Release of an N-terminal tripeptide from a polypeptide.. Secreted tripeptidyl-peptidase which degrades proteins at acidic pHs and is involved in virulence. The chain is Tripeptidyl-peptidase SED3 (SED3) from Arthroderma otae (strain ATCC MYA-4605 / CBS 113480) (Microsporum canis).